The primary structure comprises 370 residues: 3-isopropylmalate dehydrogenase (370 aa).

77–90 (GPKWDSVPYEVRPE) is an NAD(+) binding site. Substrate contacts are provided by Arg97, Arg107, Arg135, and Asp226. Mg(2+) is bound by residues Asp226, Asp250, and Asp254. 290–302 (GSAPDIAGKGIAN) serves as a coordination point for NAD(+).

The protein belongs to the isocitrate and isopropylmalate dehydrogenases family. LeuB type 1 subfamily. In terms of assembly, homodimer. It depends on Mg(2+) as a cofactor. Mn(2+) serves as cofactor.

It localises to the cytoplasm. It carries out the reaction (2R,3S)-3-isopropylmalate + NAD(+) = 4-methyl-2-oxopentanoate + CO2 + NADH. The protein operates within amino-acid biosynthesis; L-leucine biosynthesis; L-leucine from 3-methyl-2-oxobutanoate: step 3/4. In terms of biological role, catalyzes the oxidation of 3-carboxy-2-hydroxy-4-methylpentanoate (3-isopropylmalate) to 3-carboxy-4-methyl-2-oxopentanoate. The product decarboxylates to 4-methyl-2 oxopentanoate. The chain is 3-isopropylmalate dehydrogenase from Brucella abortus (strain 2308).